Consider the following 556-residue polypeptide: Formate--tetrahydrofolate ligase (556 aa).

65–72 (TPAGEGKS) serves as a coordination point for ATP.

It belongs to the formate--tetrahydrofolate ligase family.

It catalyses the reaction (6S)-5,6,7,8-tetrahydrofolate + formate + ATP = (6R)-10-formyltetrahydrofolate + ADP + phosphate. It functions in the pathway one-carbon metabolism; tetrahydrofolate interconversion. This chain is Formate--tetrahydrofolate ligase, found in Streptococcus pneumoniae (strain JJA).